Consider the following 61-residue polypeptide: Mu-diguetoxin-Dc1c (61 aa).

3 disulfides stabilise this stretch: Cys-12–Cys-25, Cys-19–Cys-39, and Cys-24–Cys-53.

Belongs to the neurotoxin 26 (DTX) family. Expressed by the venom gland.

Its subcellular location is the secreted. In terms of biological role, acts by delaying the inactivation of presynaptic voltage-sensitive sodium channels (Nav). Acts against insects and causes a progressive spastic paralysis. The polypeptide is Mu-diguetoxin-Dc1c (Diguetia canities (Desert bush spider)).